The sequence spans 356 residues: S-adenosylmethionine:tRNA ribosyltransferase-isomerase (356 aa).

The protein belongs to the QueA family. As to quaternary structure, monomer.

The protein resides in the cytoplasm. The catalysed reaction is 7-aminomethyl-7-carbaguanosine(34) in tRNA + S-adenosyl-L-methionine = epoxyqueuosine(34) in tRNA + adenine + L-methionine + 2 H(+). It functions in the pathway tRNA modification; tRNA-queuosine biosynthesis. Transfers and isomerizes the ribose moiety from AdoMet to the 7-aminomethyl group of 7-deazaguanine (preQ1-tRNA) to give epoxyqueuosine (oQ-tRNA). This Escherichia coli (strain ATCC 8739 / DSM 1576 / NBRC 3972 / NCIMB 8545 / WDCM 00012 / Crooks) protein is S-adenosylmethionine:tRNA ribosyltransferase-isomerase.